A 324-amino-acid polypeptide reads, in one-letter code: bZIP transcription factor 46 (324 aa).

Residues 106–127 form a disordered region; that stretch reads LGGSDDEDPAAAAAAAAPAQRQ. Low complexity predominate over residues 115–124; that stretch reads AAAAAAAAPA. In terms of domain architecture, bZIP spans 242-287; sequence VERRQRRMIKNRESAARSRARKQAYIMELEAEVAKLKEQKAELQKK. A basic motif region spans residues 244–263; sequence RRQRRMIKNRESAARSRARK. Residues 270-284 form a leucine-zipper region; it reads LEAEVAKLKEQKAEL.

In terms of assembly, interacts with MODD. Interacts with SAPK2, SAPK6 and SAPK9. In terms of processing, phosphorylated on serine and threonine residues by SAPK2, SAPK6 and SAPK9. Phosphorylation is required for full transactivation activity. Expressed in roots, shoots, leaves, flag leaves, stems, flowers and panicles. Widely expressed.

It is found in the nucleus. Its function is as follows. Transcription factor involved in abscisic acid (ABA) signaling pathway. Transcription factor activity is fully activated by ABA. Acts as a positive regulator of the expression of abiotic stress-responsive genes through an ABA-dependent signaling pathway. Acts as a positive regulator of ABA signaling and drought stress tolerance. Plays an important role in ABA and auxin responses. Involved in ABA signaling and stress responses by directly binding to the ABA-responsive element (ABRE)-containing genes, especially WRKY family genes. Modulates response to auxin. Suppresses auxin signaling by targeting ABRE-containing genes related to auxin metabolism or signaling. This is bZIP transcription factor 46 from Oryza sativa subsp. japonica (Rice).